The chain runs to 101 residues: UPF0235 protein MMP1055 (101 aa).

This sequence belongs to the UPF0235 family.

The sequence is that of UPF0235 protein MMP1055 from Methanococcus maripaludis (strain DSM 14266 / JCM 13030 / NBRC 101832 / S2 / LL).